Here is a 710-residue protein sequence, read N- to C-terminus: Early transcription factor 82 kDa subunit (710 aa).

This sequence belongs to the poxviridae VETF large subunit family. Heterodimer of a 70 kDa and a 82 kDa subunit. Part of the early transcription complex composed of ETF, RAP94/OPG109, and the DNA-directed RNA polymerase.

It localises to the virion. Functionally, acts with RNA polymerase to initiate transcription from early gene promoters. Is recruited by the RPO-associated protein of 94 kDa RAP94/OPG109 to form the early transcription complex, which also contains the core RNA polymerase. ETF heterodimer binds to early gene promoters. The chain is Early transcription factor 82 kDa subunit (OPG133) from Vaccinia virus (strain Ankara) (VACV).